The following is a 461-amino-acid chain: Armadillo repeat-containing X-linked protein 1 (461 aa).

The Mitochondrial intermembrane portion of the chain corresponds to 1-6; the sequence is MGRTRE. 2 mitochondrion outer membrane (MOM)-targeting sequence regions span residues 1-6 and 26-36; these read MGRTRE and RLTWGKDENEK. The helical; Signal-anchor transmembrane segment at 7–29 threads the bilayer; sequence AGCVAAGMVIGAGACYCVYRLTW. Over 30–461 the chain is Cytoplasmic; it reads GKDENEKLWD…VKVLKVLTKL (432 aa). Disordered regions lie at residues 34-110 and 148-192; these read NEKL…HSEG and SSLP…PATA. Acidic residues predominate over residues 38-51; it reads WDDEDEEEEEEEES. Residues 96–110 are compositionally biased toward basic and acidic residues; it reads PDVKKEVYPESHSEG. Over residues 167–185 the composition is skewed to basic residues; that stretch reads SRARNRTSGKVKRKNRSKS. 4 ARM repeats span residues 203 to 243, 245 to 284, 366 to 406, and 423 to 461; these read PYKI…NNAA, SFNQ…NLSV, PAMT…NIND, and SSLF…LTKL.

Belongs to the eutherian X-chromosome-specific Armcx family. In terms of assembly, interacts with MIRO1.

It is found in the mitochondrion. The protein localises to the mitochondrion outer membrane. Functionally, regulates mitochondrial transport during axon regeneration. Increases the proportion of motile mitochondria by recruiting stationary mitochondria into the motile pool. Enhances mitochondria movement and neurite growth in both adult axons and embryonic neurons. Promotes neuronal survival and axon regeneration after nerve injury. May link mitochondria to the Trak1-kinesin motor complex via its interaction with MIRO1. This Rattus norvegicus (Rat) protein is Armadillo repeat-containing X-linked protein 1 (Armcx1).